The following is a 586-amino-acid chain: uncharacterized protein (586 aa).

Coiled-coil stretches lie at residues 183–293 (THTE…ELEN) and 331–400 (FKDK…DKKN).

This is an uncharacterized protein from Bacillus subtilis (strain 168).